A 65-amino-acid chain; its full sequence is Hirudin-3B (65 aa).

The tract at residues 1-3 (VVY) is interaction with thrombin active site. 3 disulfide bridges follow: Cys6–Cys14, Cys16–Cys28, and Cys22–Cys39. Residues 40–65 (VTGEGTPKPQSHNDGDFEEIPEEYLQ) form a disordered region. An O-linked (GalNAc...) threonine glycan is attached at Thr45. The tract at residues 55-65 (DFEEIPEEYLQ) is interaction with fibrinogen-binding exosite of thrombin. Residues 55–65 (DFEEIPEEYLQ) are compositionally biased toward acidic residues. Tyr63 bears the Sulfotyrosine mark.

Belongs to the protease inhibitor I14 (hirudin) family.

The protein localises to the secreted. Functionally, hirudin is a potent thrombin-specific protease inhibitor. It forms a stable non-covalent complex with alpha-thrombin, thereby abolishing its ability to cleave fibrinogen. The protein is Hirudin-3B of Hirudo medicinalis (Medicinal leech).